The sequence spans 121 residues: Large ribosomal subunit protein uL18 (121 aa).

Belongs to the universal ribosomal protein uL18 family. In terms of assembly, part of the 50S ribosomal subunit; part of the 5S rRNA/L5/L18/L25 subcomplex. Contacts the 5S and 23S rRNAs.

In terms of biological role, this is one of the proteins that bind and probably mediate the attachment of the 5S RNA into the large ribosomal subunit, where it forms part of the central protuberance. The polypeptide is Large ribosomal subunit protein uL18 (Mesomycoplasma hyopneumoniae (strain 232) (Mycoplasma hyopneumoniae)).